We begin with the raw amino-acid sequence, 1021 residues long: Collagen alpha-1(I) chain (1021 aa).

Residues aspartate 1–proline 1021 are disordered. An Allysine modification is found at lysine 3. Serine 4 carries the phosphoserine modification. Proline 23, proline 26, proline 29, proline 38, proline 41, proline 44, proline 59, proline 74, proline 80, proline 89, and proline 95 each carry 4-hydroxyproline. The segment covering proline 31–methionine 50 has biased composition (low complexity). Over residues asparagine 62–glutamate 76 the composition is skewed to basic and acidic residues. Lysine 98 is modified (5-hydroxylysine; alternate). Lysine 98 carries an O-linked (Gal...) hydroxylysine; alternate glycan. At serine 104 the chain carries Phosphoserine. The segment covering aspartate 112 to asparagine 128 has biased composition (low complexity). 4-hydroxyproline occurs at positions 122, 125, 131, 140, 146, 167, 176, 179, 206, 209, 221, 227, 236, 242, 245, and 260. The segment covering proline 146 to alanine 164 has biased composition (low complexity). The span at proline 166–phenylalanine 178 shows a compositional bias: pro residues. Positions alanine 212–proline 262 are enriched in low complexity. Position 263 is a 5-hydroxylysine (lysine 263). 4-hydroxyproline is present on residues proline 269, proline 272, proline 284, proline 293, proline 308, proline 314, proline 323, and proline 329. Residues glycine 318–glycine 327 are compositionally biased toward gly residues. Lysine 338 is subject to 5-hydroxylysine. A 4-hydroxyproline mark is found at proline 347, proline 356, proline 362, proline 368, proline 377, proline 380, proline 389, proline 398, proline 404, proline 416, proline 425, proline 434, proline 437, proline 455, proline 472, proline 478, proline 484, proline 490, proline 496, proline 502, proline 514, proline 523, proline 534, proline 546, proline 549, proline 555, proline 561, and proline 570. Residues lysine 371–proline 425 show a composition bias toward low complexity. The segment covering proline 484–glutamine 493 has biased composition (low complexity). A compositionally biased stretch (low complexity) spans asparagine 536–glutamine 558. At lysine 582 the chain carries 5-hydroxylysine. 4-hydroxyproline is present on residues proline 588 and proline 603. Over residues alanine 615–alanine 629 the composition is skewed to low complexity. A Phosphoserine modification is found at serine 618. 4-hydroxyproline is present on residues proline 630, proline 636, proline 639, proline 648, proline 654, proline 681, and proline 690. The span at alanine 642–serine 672 shows a compositional bias: low complexity. Residue lysine 693 is modified to 5-hydroxylysine. Over residues serine 698 to valine 714 the composition is skewed to low complexity. Residues proline 702 and proline 708 each carry the 4-hydroxyproline modification. 3-hydroxyproline is present on proline 716. A 4-hydroxyproline mark is found at proline 717, proline 726, proline 729, proline 750, proline 759, proline 768, proline 777, proline 794, proline 803, proline 806, proline 812, proline 827, proline 833, proline 839, proline 848, and proline 854. Residues glutamate 743–glutamate 752 show a composition bias toward low complexity. The span at serine 762–proline 777 shows a compositional bias: low complexity. Positions proline 826–alanine 836 are enriched in pro residues. Over residues proline 838–serine 853 the composition is skewed to low complexity. Lysine 863 is subject to 5-hydroxylysine. Over residues proline 871–valine 886 the composition is skewed to pro residues. 3 positions are modified to 4-hydroxyproline: proline 874, proline 877, and proline 880. The span at alanine 907–proline 921 shows a compositional bias: low complexity. The span at arginine 922–isoleucine 936 shows a compositional bias: basic and acidic residues. Lysine 925 carries the 5-hydroxylysine modification. Lysine 937 carries the 5-hydroxylysine; alternate modification. The O-linked (Gal...) hydroxylysine; alternate glycan is linked to lysine 937. 4-hydroxyproline is present on residues proline 952, proline 955, proline 973, and proline 988. Positions proline 955 to proline 988 are enriched in low complexity. 3-hydroxyproline is present on proline 993. Proline 994 carries the 4-hydroxyproline modification. Pro residues predominate over residues valine 1006–proline 1021. 3-hydroxyproline is present on proline 1008. 4-hydroxyproline is present on proline 1009. Proline 1011 is subject to 3-hydroxyproline. Proline 1012 is subject to 4-hydroxyproline. Residue proline 1014 is modified to 3-hydroxyproline. 3 positions are modified to 4-hydroxyproline: proline 1015, proline 1018, and proline 1021.

It belongs to the fibrillar collagen family. As to quaternary structure, trimers of one alpha 2(I) and two alpha 1(I) chains. Post-translationally, contains mostly 4-hydroxyproline. Proline residues at the third position of the tripeptide repeating unit (G-X-Y) are hydroxylated in some or all of the chains. Contains 3-hydroxyproline at a few sites. This modification occurs on the first proline residue in the sequence motif Gly-Pro-Hyp, where Hyp is 4-hydroxyproline. In terms of processing, lysine residues at the third position of the tripeptide repeating unit (G-X-Y) are 5-hydroxylated in some or all of the chains. Post-translationally, O-glycosylated on hydroxylated lysine residues. The O-linked glycan consists of a Glc-Gal disaccharide. As to expression, expressed in bones.

Its subcellular location is the secreted. It localises to the extracellular space. The protein resides in the extracellular matrix. Functionally, type I collagen is a member of group I collagen (fibrillar forming collagen). The sequence is that of Collagen alpha-1(I) chain from Doedicurus sp. (South American giant glyptodont).